Reading from the N-terminus, the 701-residue chain is Elongation factor G (701 aa).

The 284-residue stretch at 8–291 (SRYRNIGIVA…AVIDFLPAPT (284 aa)) folds into the tr-type G domain. GTP-binding positions include 17–24 (AHVDAGKT), 89–93 (DTPGH), and 143–146 (NKMD).

Belongs to the TRAFAC class translation factor GTPase superfamily. Classic translation factor GTPase family. EF-G/EF-2 subfamily.

The protein localises to the cytoplasm. Functionally, catalyzes the GTP-dependent ribosomal translocation step during translation elongation. During this step, the ribosome changes from the pre-translocational (PRE) to the post-translocational (POST) state as the newly formed A-site-bound peptidyl-tRNA and P-site-bound deacylated tRNA move to the P and E sites, respectively. Catalyzes the coordinated movement of the two tRNA molecules, the mRNA and conformational changes in the ribosome. The chain is Elongation factor G from Pseudomonas fluorescens (strain Pf0-1).